A 140-amino-acid chain; its full sequence is MAKKITGYIKLQVPAGKANPAPPIGPALGQHGVNIMEFCKAFNAKTQADEGTITPVVITVYADRSFTFVTKTPPASVLIKKALGIESGSSVPNKNKVGKLTKAQVQEIASKKMPDLNAASLEAAMKTIEGTARSMGVEIV.

This sequence belongs to the universal ribosomal protein uL11 family. In terms of assembly, part of the ribosomal stalk of the 50S ribosomal subunit. Interacts with L10 and the large rRNA to form the base of the stalk. L10 forms an elongated spine to which L12 dimers bind in a sequential fashion forming a multimeric L10(L12)X complex. One or more lysine residues are methylated.

Functionally, forms part of the ribosomal stalk which helps the ribosome interact with GTP-bound translation factors. The polypeptide is Large ribosomal subunit protein uL11 (Geotalea daltonii (strain DSM 22248 / JCM 15807 / FRC-32) (Geobacter daltonii)).